We begin with the raw amino-acid sequence, 85 residues long: Small ribosomal subunit protein bS20 (85 aa).

Residues 1 to 22 are disordered; the sequence is MANIKSAIKRAKLSEERRAHNA.

The protein belongs to the bacterial ribosomal protein bS20 family.

Functionally, binds directly to 16S ribosomal RNA. This Bacillus cytotoxicus (strain DSM 22905 / CIP 110041 / 391-98 / NVH 391-98) protein is Small ribosomal subunit protein bS20.